A 319-amino-acid polypeptide reads, in one-letter code: Probable alcohol dehydrogenase (319 aa).

Zn(2+) contacts are provided by cysteine 18, histidine 39, cysteine 68, cysteine 71, cysteine 74, cysteine 82, and cysteine 149.

This sequence belongs to the zinc-containing alcohol dehydrogenase family. It depends on Zn(2+) as a cofactor.

It catalyses the reaction a primary alcohol + NAD(+) = an aldehyde + NADH + H(+). It carries out the reaction a secondary alcohol + NAD(+) = a ketone + NADH + H(+). In Pseudomonas sp, this protein is Probable alcohol dehydrogenase (terPD).